We begin with the raw amino-acid sequence, 205 residues long: MLVRLLRVILLASMVFCADILQLSYSDDAKDAIPLGTFEIDSTSDGNVTVTTVNIQDVEVSGEYCLNAQIEGKLDMPCFSYMKLRTPLKYDLIVDVDEDNEVKQVSLSYDETNDAITATVRYPEAGPTAPVTKLKKKTKTYADKKASKNKDGSTAQFEEDEEVKEVSWFQKNWKMLLLGLLIYNFVAGSAKKQQQGGAGADQKTE.

A signal peptide spans 1 to 17 (MLVRLLRVILLASMVFC). Residues 18–172 (ADILQLSYSD…VKEVSWFQKN (155 aa)) are Lumenal-facing. N47 carries N-linked (GlcNAc...) asparagine glycosylation. A helical membrane pass occupies residues 173 to 190 (WKMLLLGLLIYNFVAGSA). Topologically, residues 191–205 (KKQQQGGAGADQKTE) are cytoplasmic.

In terms of assembly, component of the ER membrane protein complex (EMC).

The protein resides in the endoplasmic reticulum membrane. In terms of biological role, part of the endoplasmic reticulum membrane protein complex (EMC) that enables the energy-independent insertion into endoplasmic reticulum membranes of newly synthesized membrane proteins. Preferentially accommodates proteins with transmembrane domains that are weakly hydrophobic or contain destabilizing features such as charged and aromatic residues. Involved in the cotranslational insertion of multi-pass membrane proteins in which stop-transfer membrane-anchor sequences become ER membrane spanning helices. It is also required for the post-translational insertion of tail-anchored/TA proteins in endoplasmic reticulum membranes. By mediating the proper cotranslational insertion of N-terminal transmembrane domains in an N-exo topology, with translocated N-terminus in the lumen of the ER, controls the topology of multi-pass membrane proteins. The chain is Endoplasmic reticulum membrane protein complex subunit 10 from Saccharomyces cerevisiae (strain ATCC 204508 / S288c) (Baker's yeast).